Reading from the N-terminus, the 532-residue chain is CTP synthase (532 aa).

The tract at residues 1-267 is amidoligase domain; that stretch reads MAKFVFVTGG…HGLVLDQLQI (267 aa). S13 is a binding site for CTP. S13 is a UTP binding site. Residue 14–19 participates in ATP binding; sequence GLGKGI. Y54 provides a ligand contact to L-glutamine. D71 is an ATP binding site. Mg(2+) is bound by residues D71 and E141. CTP contacts are provided by residues 148–150, 188–193, and K224; these read DIE and KTKPIQ. UTP is bound by residues 188-193 and K224; that span reads KTKPIQ. One can recognise a Glutamine amidotransferase type-1 domain in the interval 292–532; the sequence is EVTFVGKYIE…GFVEAIVNNK (241 aa). G354 serves as a coordination point for L-glutamine. Residue C381 is the Nucleophile; for glutamine hydrolysis of the active site. L-glutamine-binding positions include 382–385, E405, and R462; that span reads LGMQ. Catalysis depends on residues H507 and E509.

It belongs to the CTP synthase family. In terms of assembly, homotetramer.

The enzyme catalyses UTP + L-glutamine + ATP + H2O = CTP + L-glutamate + ADP + phosphate + 2 H(+). The catalysed reaction is L-glutamine + H2O = L-glutamate + NH4(+). It carries out the reaction UTP + NH4(+) + ATP = CTP + ADP + phosphate + 2 H(+). Its pathway is pyrimidine metabolism; CTP biosynthesis via de novo pathway; CTP from UDP: step 2/2. With respect to regulation, allosterically activated by GTP, when glutamine is the substrate; GTP has no effect on the reaction when ammonia is the substrate. The allosteric effector GTP functions by stabilizing the protein conformation that binds the tetrahedral intermediate(s) formed during glutamine hydrolysis. Inhibited by the product CTP, via allosteric rather than competitive inhibition. In terms of biological role, catalyzes the ATP-dependent amination of UTP to CTP with either L-glutamine or ammonia as the source of nitrogen. Regulates intracellular CTP levels through interactions with the four ribonucleotide triphosphates. In Mesoplasma florum (strain ATCC 33453 / NBRC 100688 / NCTC 11704 / L1) (Acholeplasma florum), this protein is CTP synthase.